A 566-amino-acid polypeptide reads, in one-letter code: Heat shock protein 70 homolog C57A7.12 (566 aa).

39–46 (AFNRDGKT) is a binding site for ATP. Phosphoserine is present on residues Ser-86 and Ser-500.

This sequence belongs to the heat shock protein 70 family.

This chain is Heat shock protein 70 homolog C57A7.12, found in Schizosaccharomyces pombe (strain 972 / ATCC 24843) (Fission yeast).